Reading from the N-terminus, the 339-residue chain is Extracellular matrix protein-binding protein emp (339 aa).

Positions 1-26 are cleaved as a signal peptide; that stretch reads MKKKLFVLTMSTLFATQLINSNHANA.

Its subcellular location is the cell surface. Its function is as follows. Adhesin that binds to the host cell extracellular matrix proteins fibronectin, fibrinogen, collagen, and vitronectin. The polypeptide is Extracellular matrix protein-binding protein emp (emp) (Staphylococcus aureus (strain bovine RF122 / ET3-1)).